The sequence spans 556 residues: Vacuolar protein 8 (556 aa).

The N-myristoyl glycine moiety is linked to residue G2. Residues C4, C5, and C7 are each lipidated (S-palmitoyl cysteine). ARM repeat units follow at residues 38-74, 75-115, 117-156, 158-197, 199-238, 242-281, 283-322, 324-364, and 408-447; these read NRSEVDFFTDGPLRALSTLVYSENIDLQRSAALAFAE, VTEK…NLAV, DSNKVLIVNMGGLEPLIRQMMSPNIEVQCNAVGCITNLAT, DQNKSKIATSGALIPLTKLAKSKDLRVQRNATGALLNMTH, LENRQELVNAGSVPILVQLLSSTDPDVQYYCTTALSNIAV, NRKKLASTEPKLISQLVQLMDSTSPRVQCQATLALRNLAS, ANYQLEIVRAGGLPNLVTLLNSTHQPLVLAAVACIRNISI, PLNE…NLAA, and DDLKMKLLDSNIIEVLLPLTSSENGEVCGNAAAALANLCS.

Belongs to the beta-catenin family.

Its subcellular location is the vacuole membrane. Functionally, functions in both vacuole inheritance and protein targeting from the cytoplasm to vacuole. This chain is Vacuolar protein 8 (VAC8), found in Komagataella pastoris (Yeast).